The primary structure comprises 89 residues: Neurotoxin beta-KTx 12 (89 aa).

Positions 1 to 20 are cleaved as a signal peptide; it reads MKQYIFFLALIVLVSTFAEA. A propeptide spanning residues 21-39 is cleaved from the precursor; the sequence is GKKTEILDKVKKVFSKAKD. Positions 53 to 89 constitute a BetaSPN-type CS-alpha/beta domain; that stretch reads ELGCPFIDKWCEDHCESKKLVGKCENFDCSCVKLGGK. Intrachain disulfides connect Cys56–Cys76, Cys63–Cys81, and Cys67–Cys83.

Belongs to the long chain scorpion toxin family. Class 2 subfamily. In terms of tissue distribution, expressed by the venom gland.

It localises to the secreted. Its function is as follows. Inhibits voltage-gated potassium channel. This Lychas mucronatus (Chinese swimming scorpion) protein is Neurotoxin beta-KTx 12.